The sequence spans 2472 residues: Centrosomal protein of 290 kDa (2472 aa).

Residues 1–689 form a self-association (with itself or C-terminus) region; sequence MPPNIKWKEL…MESKNAEGIF (689 aa). Coiled-coil stretches lie at residues 59–747, 1129–1392, and 1459–1492; these read MKMK…LRQS, RQRI…QQSK, and QVIL…ILSR. Residues 128–164 are disordered; that stretch reads DRELEDMEKELDKEKKVNEQLALRNEEAENENSKLRR. Residues 137–164 show a composition bias toward basic and acidic residues; the sequence is ELDKEKKVNEQLALRNEEAENENSKLRR. Residues 690 to 890 form an interaction with IQCB1 region; sequence DASLHLKAQV…TVLQVNEKSL (201 aa). Disordered regions lie at residues 1691-1713 and 2451-2472; these read AHKD…SRAP and PSPL…FPIY. A compositionally biased stretch (polar residues) spans 1697-1713; sequence SLKSELQAQKEANSRAP. The interval 1960–2472 is self-association (with itself or N-terminus); sequence TTGMTVDQVL…GESPHSFPIY (513 aa).

In terms of assembly, part of the tectonic-like complex (also named B9 complex). Interacts with ATF4 via its N-terminal region. Associates with the BBSome complex, interacting (via N-terminus) with BBS4. Interacts with IQCB1/NPHP5; IQCB1 and CEP290/NPHP6 are proposed to form a functional NPHP5-6 module localized to the centrosome. Interacts with NPHP4; the interaction likely requires additional interactors. Interacts with ZNF423, FAM161A, CEP162, CEP162, CEP131, TALPID3, CCDC13, CC2D2A, RPGRIP1. Can self-associate (homo- or heteromeric). Interacts with CCP110; required for suppressing cilia formation. Interacts with RPGR. Associates (via C-terminus) with microtubules; association to microtubule is reduced in response to cellular stress, such as ultraviolet light (UV) radiation or heat shock, in a process that requires p38 MAP kinase signaling. Interacts with FAM161A. Interacts with PCM1. Interacts with CCDC66. Interacts with ARMC9 and CSPP1. Post-translationally, ubiquitinated. May undergo monoubiquitination; monoubiquitination is inhibited in response to cellular stress, such as ultraviolet light (UV) radiation or heat shock, but does not cause its displacement from centriolar satellites. In terms of tissue distribution, expressed in multiple organs during early postnatal development, with highest levels in hindbrain.

Its subcellular location is the cytoplasm. It localises to the cytoskeleton. The protein resides in the microtubule organizing center. The protein localises to the centrosome. It is found in the centriolar satellite. Its subcellular location is the nucleus. It localises to the centriole. The protein resides in the cell projection. The protein localises to the cilium. It is found in the cilium basal body. Its subcellular location is the cytoplasmic vesicle. Involved in early and late steps in cilia formation. Its association with CCP110 is required for inhibition of primary cilia formation by CCP110. May play a role in early ciliogenesis in the disappearance of centriolar satellites and in the transition of primary ciliar vesicles (PCVs) to capped ciliary vesicles (CCVs). Required for the centrosomal recruitment of RAB8A and for the targeting of centriole satellite proteins to centrosomes such as of PCM1. Required for the correct localization of ciliary and phototransduction proteins in retinal photoreceptor cells; may play a role in ciliary transport processes. Required for efficient recruitment of RAB8A to primary cilium. In the ciliary transition zone is part of the tectonic-like complex (also named B9 complex) which is required for tissue-specific ciliogenesis and may regulate ciliary membrane composition. Involved in regulation of the BBSome complex integrity, specifically for presence of BBS2, BBS5 and BBS8/TTC8 in the complex, and in ciliary targeting of selected BBSome cargos. May play a role in controlling entry of the BBSome complex to cilia possibly implicating IQCB1/NPHP5. Activates ATF4-mediated transcription. The sequence is that of Centrosomal protein of 290 kDa from Mus musculus (Mouse).